Consider the following 127-residue polypeptide: Modulator protein MzrA (127 aa).

Residues 1–11 (MRKPRVTLRHL) are Cytoplasmic-facing. The chain crosses the membrane as a helical span at residues 12 to 31 (AWSTMLLMVLGTGMLFWSAV). Residues 32-127 (RQQESTLAIR…RLRDAPHRMG (96 aa)) lie on the Periplasmic side of the membrane.

It belongs to the MzrA family. As to quaternary structure, interacts with EnvZ.

It localises to the cell inner membrane. Modulates the activity of the EnvZ/OmpR two-component regulatory system, probably by directly modulating EnvZ enzymatic activity and increasing stability of phosphorylated OmpR. The sequence is that of Modulator protein MzrA from Citrobacter rodentium (strain ICC168) (Citrobacter freundii biotype 4280).